The sequence spans 524 residues: GMP synthase [glutamine-hydrolyzing] (524 aa).

The 190-residue stretch at 12–201 folds into the Glutamine amidotransferase type-1 domain; sequence TILVLDFGSQ…AVDICKASQS (190 aa). Cys88 acts as the Nucleophile in catalysis. Catalysis depends on residues His175 and Glu177. The GMPS ATP-PPase domain occupies 202 to 399; the sequence is WNMENFIDTE…LGISHELVWR (198 aa). Position 230–236 (230–236) interacts with ATP; the sequence is SGGVDST. The XMP site is built by Arg303, Asp461, Lys516, and Glu522.

Homodimer. It depends on Mg(2+) as a cofactor.

The protein resides in the cytoplasm. It localises to the cytosol. The catalysed reaction is XMP + L-glutamine + ATP + H2O = GMP + L-glutamate + AMP + diphosphate + 2 H(+). The protein operates within purine metabolism; GMP biosynthesis; GMP from XMP (L-Gln route): step 1/1. In terms of biological role, catalyzes the conversion of xanthine monophosphate (XMP) to GMP in the presence of glutamine and ATP through an adenyl-XMP intermediate. The sequence is that of GMP synthase [glutamine-hydrolyzing] (GUA1) from Kluyveromyces lactis (strain ATCC 8585 / CBS 2359 / DSM 70799 / NBRC 1267 / NRRL Y-1140 / WM37) (Yeast).